The chain runs to 158 residues: Endoribonuclease YbeY (158 aa).

Residues H120, H124, and H130 each contribute to the Zn(2+) site.

The protein belongs to the endoribonuclease YbeY family. Zn(2+) is required as a cofactor.

Its subcellular location is the cytoplasm. Functionally, single strand-specific metallo-endoribonuclease involved in late-stage 70S ribosome quality control and in maturation of the 3' terminus of the 16S rRNA. This Spiroplasma citri protein is Endoribonuclease YbeY.